The chain runs to 514 residues: MATPQFSCLLPAFFLLVVFLFLLIKELRRYKSPKTTQKLPPGPPMLPIIGNLHQMASSLPHQNLKKLADKYGPLMHLKLGEISAVAVSSPRLAKEVLQTRGLAFADRPQSVVAKLMLHNCLGVTFSRYGDYWRQLRQIFAMELLSSKSVQSFSTIMEDELFAMVKSIESEAGRPIILADKLISYLYATLSRATLGRVCKGKETLIEVTGETLALSGAQSLEDIFPSVKIFAYLNPLRPKVRKLFNRIDGVLEDIINQQEKKLLSARVDNDQLQPEENDMLSVLLKLRNGKDSKVQVTNNDIKAIIFELFLAGTVGSSTTVEWAMSEMMKNPKVMEKAQHEVREVLKGKKRICQSDIQKLSYLKLVVKETLRLHPPAPLLFPRECRGQCEVDGYTIPAKAMVMVNCWALGRDPEHWIEADKFEPERFKNSSIDFIGNHFEYIPFGAGRRICPGISFGATNVELLLAALLYHFDWELAGGMHPKDLDMLELFGPGCTRKNPLSVIPSICIPSHDDN.

The chain crosses the membrane as a helical span at residues 4 to 24 (PQFSCLLPAFFLLVVFLFLLI). An N-linked (GlcNAc...) asparagine glycan is attached at N428. Heme is bound at residue C450.

It belongs to the cytochrome P450 family. It depends on heme as a cofactor.

It localises to the membrane. The catalysed reaction is tetrahydroalstonine + A + reduced [NADPH--hemoprotein reductase] + O2 = alstonine + AH2 + oxidized [NADPH--hemoprotein reductase] + 2 H2O + H(+). It participates in alkaloid biosynthesis. Its function is as follows. A cytochrome P450 monooxygenase involved in the biosynthesis of pentacyclic alkaloids natural products such as alstonine, putative antipsychotic compounds. Catalyzes the conversion of tetrahydroalstonine to alstonine. No oxidative activity towards ajmalicine. In Alstonia scholaris (Dogbane), this protein is Alstonine synthase.